A 232-amino-acid polypeptide reads, in one-letter code: 7-cyano-7-deazaguanine synthase (232 aa).

8-18 (FSGGQDSTTCL) contributes to the ATP binding site. Zn(2+) is bound by residues cysteine 189, cysteine 198, cysteine 201, and cysteine 204.

It belongs to the QueC family. Zn(2+) is required as a cofactor.

The catalysed reaction is 7-carboxy-7-deazaguanine + NH4(+) + ATP = 7-cyano-7-deazaguanine + ADP + phosphate + H2O + H(+). It participates in purine metabolism; 7-cyano-7-deazaguanine biosynthesis. Catalyzes the ATP-dependent conversion of 7-carboxy-7-deazaguanine (CDG) to 7-cyano-7-deazaguanine (preQ(0)). In Yersinia pseudotuberculosis serotype O:1b (strain IP 31758), this protein is 7-cyano-7-deazaguanine synthase.